A 368-amino-acid polypeptide reads, in one-letter code: Methionine import ATP-binding protein MetN (368 aa).

The region spanning 5 to 260 (IELNNLSVQF…PKEALTKQFI (256 aa)) is the ABC transporter domain. 41–48 (GYSGAGKS) lines the ATP pocket.

Belongs to the ABC transporter superfamily. Methionine importer (TC 3.A.1.24) family. In terms of assembly, the complex is composed of two ATP-binding proteins (MetN), two transmembrane proteins (MetI) and a solute-binding protein (MetQ).

The protein resides in the cell membrane. It carries out the reaction L-methionine(out) + ATP + H2O = L-methionine(in) + ADP + phosphate + H(+). It catalyses the reaction D-methionine(out) + ATP + H2O = D-methionine(in) + ADP + phosphate + H(+). In terms of biological role, part of the ABC transporter complex MetNIQ involved in methionine import. Responsible for energy coupling to the transport system. In Lactococcus lactis subsp. lactis (strain IL1403) (Streptococcus lactis), this protein is Methionine import ATP-binding protein MetN.